The chain runs to 145 residues: uncharacterized protein (145 aa).

This sequence belongs to the asfivirus K145R family.

The protein localises to the virion. This is an uncharacterized protein from Ornithodoros (relapsing fever ticks).